A 132-amino-acid chain; its full sequence is L-ectoine synthase (132 aa).

It belongs to the ectoine synthase family.

The catalysed reaction is (2S)-4-acetamido-2-aminobutanoate = L-ectoine + H2O. Its pathway is amine and polyamine biosynthesis; ectoine biosynthesis; L-ectoine from L-aspartate 4-semialdehyde: step 3/3. Functionally, catalyzes the circularization of gamma-N-acetyl-alpha,gamma-diaminobutyric acid (ADABA) to ectoine (1,4,5,6-tetrahydro-2-methyl-4-pyrimidine carboxylic acid), which is an excellent osmoprotectant. This Rhodococcus erythropolis (strain PR4 / NBRC 100887) protein is L-ectoine synthase.